A 100-amino-acid chain; its full sequence is Integration host factor subunit alpha (100 aa).

The disordered stretch occupies residues Gly-50–Glu-70.

This sequence belongs to the bacterial histone-like protein family. Heterodimer of an alpha and a beta chain.

Its function is as follows. This protein is one of the two subunits of integration host factor, a specific DNA-binding protein that functions in genetic recombination as well as in transcriptional and translational control. This chain is Integration host factor subunit alpha, found in Chromobacterium violaceum (strain ATCC 12472 / DSM 30191 / JCM 1249 / CCUG 213 / NBRC 12614 / NCIMB 9131 / NCTC 9757 / MK).